We begin with the raw amino-acid sequence, 336 residues long: Transmembrane protein 120A (336 aa).

Over 1 to 131 the chain is Cytoplasmic; that stretch reads MNSPALQDCV…KQSKFAYKDE (131 aa). Lys129 is a binding site for CoA. The chain crosses the membrane as a helical span at residues 132 to 151; the sequence is YEKFKLYLTMILMVLSFICR. Residues 152 to 157 lie on the Extracellular side of the membrane; the sequence is FVLNSR. Residues 158–176 form a helical membrane-spanning segment; it reads VTDAVFNFLLVWYYCTLTI. Over 177 to 189 the chain is Cytoplasmic; it reads RESILINNGSRIK. Ser186 and Arg187 together coordinate CoA. The chain crosses the membrane as a helical span at residues 190-208; that stretch reads GWWVLNHYISTFLSGVMLT. The Extracellular portion of the chain corresponds to 209-217; that stretch reads WPDGLMYQM. The chain crosses the membrane as a helical span at residues 218-239; that stretch reads FRNQFLSFSMYQSFVQFLQYYY. Gln236, Tyr239, and Gln240 together coordinate CoA. At 240–269 the chain is on the cytoplasmic side; that stretch reads QSGCLYRLRALGERHNMDLTVEGFQSWMWR. Residues 270–293 traverse the membrane as a helical segment; that stretch reads GLTFLLPFLFFGQFWQLYNAITLF. Residues 294-303 are Extracellular-facing; sequence KLARHPECKE. The chain crosses the membrane as a helical span at residues 304–329; that stretch reads WQVIMCGLPFLVHFLGNFFTTLRVVH. The Cytoplasmic portion of the chain corresponds to 330–336; sequence QKFQKQN. Lys331 provides a ligand contact to CoA.

Belongs to the TMEM120 family. Homodimer.

The protein resides in the cell membrane. It is found in the nucleus inner membrane. It localises to the endoplasmic reticulum. In terms of biological role, multifunctional protein involved in mechanosensation, and plays an essential role in lipid metabolism. May function as a potential ion channel involved in sensing mechanical stimuli. TMEM120A is structurally similar to a lipid-modifying enzyme, ELOVL7, and contains a bound coenzyme A molecule, which suggests it might function as an enzyme in lipid metabolism. This Xenopus tropicalis (Western clawed frog) protein is Transmembrane protein 120A.